An 86-amino-acid chain; its full sequence is Protein YwqI (86 aa).

Positions 57-83 (DYKKAVQKNIEDTKDNVDSLKEQDEAI) form a coiled coil.

This is Protein YwqI (ywqI) from Bacillus subtilis (strain 168).